The chain runs to 340 residues: Methionine import ATP-binding protein MetN 2 (340 aa).

Positions 2-241 (ITLQNVVKEY…PKEKVTQRFV (240 aa)) constitute an ABC transporter domain. 38-45 (GYSGAGKS) lines the ATP pocket.

It belongs to the ABC transporter superfamily. Methionine importer (TC 3.A.1.24) family. The complex is composed of two ATP-binding proteins (MetN), two transmembrane proteins (MetI) and a solute-binding protein (MetQ).

Its subcellular location is the cell membrane. The catalysed reaction is L-methionine(out) + ATP + H2O = L-methionine(in) + ADP + phosphate + H(+). The enzyme catalyses D-methionine(out) + ATP + H2O = D-methionine(in) + ADP + phosphate + H(+). Part of the ABC transporter complex MetNIQ involved in methionine import. Responsible for energy coupling to the transport system. The sequence is that of Methionine import ATP-binding protein MetN 2 from Listeria innocua serovar 6a (strain ATCC BAA-680 / CLIP 11262).